A 78-amino-acid chain; its full sequence is Putative membrane protein insertion efficiency factor (78 aa).

It belongs to the UPF0161 family.

The protein localises to the cell inner membrane. In terms of biological role, could be involved in insertion of integral membrane proteins into the membrane. This is Putative membrane protein insertion efficiency factor from Prochlorococcus marinus (strain MIT 9312).